The sequence spans 195 residues: Recombination protein RecR (195 aa).

Residues 53–68 (CSVCFNIDVKSPCSIC) form a C4-type zinc finger. In terms of domain architecture, Toprim spans 76–171 (QLLCIVEELG…KITRLACGIP (96 aa)).

The protein belongs to the RecR family.

In terms of biological role, may play a role in DNA repair. It seems to be involved in an RecBC-independent recombinational process of DNA repair. It may act with RecF and RecO. The chain is Recombination protein RecR from Ehrlichia canis (strain Jake).